A 356-amino-acid chain; its full sequence is Tricetin 3',4',5'-O-trimethyltransferase (356 aa).

123–129 (MNQDKVL) serves as a coordination point for substrate. The substrate binding stretch occupies residues 155–173 (AFEYHGTDPRFNRVFNEGM). The S-adenosyl-L-methionine site is built by G201, D224, D244, M245, and K258. Catalysis depends on H262, which acts as the Proton acceptor.

It belongs to the class I-like SAM-binding methyltransferase superfamily. Cation-independent O-methyltransferase family. COMT subfamily. As to quaternary structure, homodimer. The monomer is fully active and dimerization is not required for sequential methylation. In terms of tissue distribution, expressed in roots, stems and leaves.

It catalyses the reaction tricetin + 3 S-adenosyl-L-methionine = 3',4',5'-O-trimethyltricetin + 3 S-adenosyl-L-homocysteine + 3 H(+). In terms of biological role, flavonoid B-ring-specific O-methyltransferase with a preference for flavones &gt; dihydroflavones &gt; flavonols that possess at least two B-ring hydroxyl groups. Active with tricetin, 5-hydroxyferulic acid, luteolin, quercitin, eriodictyol, quercetagetin, taxifolin, gossypetin and myricetin. No activity with naringenin, apigenin, kaempferol, 7,8-dihydroxy- or 5,7,8-trihydroxy flavones, chlorogenic acid, gallic acid or daphnetin. Catalyzes the sequential O-methylation of tricetin via 3'-O-methyltricetin, 3',5'-O-methyltricetin to 3',4',5'-O-trimethyltricetin. May also be involved in S lignin biosynthesis. This Triticum aestivum (Wheat) protein is Tricetin 3',4',5'-O-trimethyltransferase (OMT2).